Here is a 102-residue protein sequence, read N- to C-terminus: Large ribosomal subunit protein bL21 (102 aa).

It belongs to the bacterial ribosomal protein bL21 family. In terms of assembly, part of the 50S ribosomal subunit. Contacts protein L20.

Its function is as follows. This protein binds to 23S rRNA in the presence of protein L20. This is Large ribosomal subunit protein bL21 from Bifidobacterium longum (strain DJO10A).